A 301-amino-acid chain; its full sequence is Mycothiol acetyltransferase (301 aa).

N-acetyltransferase domains follow at residues 6–151 (EWRQ…ILRD) and 153–301 (VSLR…QYGR). 79-81 (LFV) contributes to the acetyl-CoA binding site. Residues E180, K219, and E235 each contribute to the 1D-myo-inositol 2-(L-cysteinylamino)-2-deoxy-alpha-D-glucopyranoside site. Acetyl-CoA-binding positions include 239–241 (VGV) and 246–252 (QGGGLGR). Y273 provides a ligand contact to 1D-myo-inositol 2-(L-cysteinylamino)-2-deoxy-alpha-D-glucopyranoside.

The protein belongs to the acetyltransferase family. MshD subfamily. As to quaternary structure, monomer.

The enzyme catalyses 1D-myo-inositol 2-(L-cysteinylamino)-2-deoxy-alpha-D-glucopyranoside + acetyl-CoA = mycothiol + CoA + H(+). Catalyzes the transfer of acetyl from acetyl-CoA to desacetylmycothiol (Cys-GlcN-Ins) to form mycothiol. The polypeptide is Mycothiol acetyltransferase (Amycolatopsis mediterranei (strain U-32)).